A 91-amino-acid polypeptide reads, in one-letter code: Alpha-defensin 31 (91 aa).

Positions 1-19 (MKKLVLLFALVLLAFQVQA) are cleaved as a signal peptide. Positions 20-65 (DSIQNTDEETKTEEQQGEEDQAVSVSFGDPQGSGLQDAALGWGRRC) are excised as a propeptide. A disordered region spans residues 22-55 (IQNTDEETKTEEQQGEEDQAVSVSFGDPQGSGLQ). 6 tandem repeats follow at residues 65 to 67 (CPR), 68 to 70 (CPP), 71 to 73 (CPR), 77 to 79 (CPR), 80 to 82 (CPT), and 83 to 85 (CPR). Residues 65-85 (CPRCPPCPRCSWCPRCPTCPR) are 6 X 3 AA tandem repeats of C-P-X.

The protein belongs to the alpha-defensin family. Paneth cells of the small bowel.

The protein resides in the secreted. Its function is as follows. Apparent precursor of a secreted, cationic, proline- and cysteine-rich peptide that contains Cys-Pro-Xaa repeats. Unlike cryptdin, the proposed mature peptide region lacks the structural motif characteristic of defensins. It may have microbicidal activities. The sequence is that of Alpha-defensin 31 from Mus musculus (Mouse).